A 638-amino-acid chain; its full sequence is Probable potassium transport system protein Kup (638 aa).

The disordered stretch occupies residues 1–20 (MQVEHEVATEGGQAPASSGH). Helical transmembrane passes span 24–44 (IAGL…TSPL), 67–87 (ILSL…VVFI), 115–135 (AWWL…DGMI), 153–173 (PAFK…LFVM), 181–201 (VGAI…VLGI), 228–248 (LIGW…EALY), 263–283 (WFSL…ALIL), 301–321 (LVYP…QAVI), 353–373 (IYVP…VVGF), 382–402 (AYGI…FVVV), 413–433 (AVLF…ATTV), and 435–455 (IFAG…LLRT).

The protein belongs to the HAK/KUP transporter (TC 2.A.72) family.

It is found in the cell inner membrane. It carries out the reaction K(+)(in) + H(+)(in) = K(+)(out) + H(+)(out). Its function is as follows. Transport of potassium into the cell. Likely operates as a K(+):H(+) symporter. The chain is Probable potassium transport system protein Kup from Azoarcus sp. (strain BH72).